The following is a 349-amino-acid chain: DNA polymerase IV (349 aa).

The region spanning 7–188 (IIHIDMDYFF…LPVKKLFGVG (182 aa)) is the UmuC domain. Mg(2+) contacts are provided by Asp11 and Asp106. Glu107 is an active-site residue.

The protein belongs to the DNA polymerase type-Y family. In terms of assembly, monomer. It depends on Mg(2+) as a cofactor.

Its subcellular location is the cytoplasm. It catalyses the reaction DNA(n) + a 2'-deoxyribonucleoside 5'-triphosphate = DNA(n+1) + diphosphate. Its function is as follows. Poorly processive, error-prone DNA polymerase involved in untargeted mutagenesis. Copies undamaged DNA at stalled replication forks, which arise in vivo from mismatched or misaligned primer ends. These misaligned primers can be extended by PolIV. Exhibits no 3'-5' exonuclease (proofreading) activity. May be involved in translesional synthesis, in conjunction with the beta clamp from PolIII. In Francisella tularensis subsp. holarctica (strain OSU18), this protein is DNA polymerase IV.